Here is a 338-residue protein sequence, read N- to C-terminus: Ketol-acid reductoisomerase (NADP(+)) (338 aa).

The region spanning 1-181 (MKVYYDKDAD…GGGKAGIIET (181 aa)) is the KARI N-terminal Rossmann domain. NADP(+)-binding positions include 24 to 27 (YGSQ), arginine 47, and serine 52. Residue histidine 107 is part of the active site. Glycine 133 contacts NADP(+). The 146-residue stretch at 182–327 (NFREETETDL…EKLRAMMPWI (146 aa)) folds into the KARI C-terminal knotted domain. Positions 190, 194, 226, and 230 each coordinate Mg(2+). Serine 251 provides a ligand contact to substrate.

Belongs to the ketol-acid reductoisomerase family. Requires Mg(2+) as cofactor.

The enzyme catalyses (2R)-2,3-dihydroxy-3-methylbutanoate + NADP(+) = (2S)-2-acetolactate + NADPH + H(+). It carries out the reaction (2R,3R)-2,3-dihydroxy-3-methylpentanoate + NADP(+) = (S)-2-ethyl-2-hydroxy-3-oxobutanoate + NADPH + H(+). Its pathway is amino-acid biosynthesis; L-isoleucine biosynthesis; L-isoleucine from 2-oxobutanoate: step 2/4. The protein operates within amino-acid biosynthesis; L-valine biosynthesis; L-valine from pyruvate: step 2/4. Its function is as follows. Involved in the biosynthesis of branched-chain amino acids (BCAA). Catalyzes an alkyl-migration followed by a ketol-acid reduction of (S)-2-acetolactate (S2AL) to yield (R)-2,3-dihydroxy-isovalerate. In the isomerase reaction, S2AL is rearranged via a Mg-dependent methyl migration to produce 3-hydroxy-3-methyl-2-ketobutyrate (HMKB). In the reductase reaction, this 2-ketoacid undergoes a metal-dependent reduction by NADPH to yield (R)-2,3-dihydroxy-isovalerate. The polypeptide is Ketol-acid reductoisomerase (NADP(+)) (Methylibium petroleiphilum (strain ATCC BAA-1232 / LMG 22953 / PM1)).